The primary structure comprises 192 residues: MSLDTVVEDVRDEARARAEDIREAAESEADEIVAEAEADAERIREERLAEVDRQIDQEREQTLSSAKLEAKQERLGARRDVLEDVYDDVEAAIEGLDGDRRRELTETLLDATLAEFDDDEDVAVYTHTEDVDLVEELVEDRNAVVDGEIDCLGGVVAESDTSRVRVNNTFDSILESVWDDELKNISERLFDQ.

This sequence belongs to the V-ATPase E subunit family. In terms of assembly, has multiple subunits with at least A(3), B(3), C, D, E, F, H, I and proteolipid K(x).

It localises to the cell membrane. Component of the A-type ATP synthase that produces ATP from ADP in the presence of a proton gradient across the membrane. This Halorubrum lacusprofundi (strain ATCC 49239 / DSM 5036 / JCM 8891 / ACAM 34) protein is A-type ATP synthase subunit E.